Reading from the N-terminus, the 356-residue chain is L-amino acid-D/L-Glu epimerase (356 aa).

Residues Arg25, Ser136, and 161–163 each bind substrate; that span reads KVK. Asp191 is a Mg(2+) binding site. Residue Asn193 participates in substrate binding. Glu219 and Asp244 together coordinate Mg(2+). Residues Lys268, 296-298, and 320-322 each bind substrate; these read CMM and DLD.

The protein belongs to the mandelate racemase/muconate lactonizing enzyme family. The cofactor is Mg(2+).

Catalyzes the epimerization of dipeptides with L-Glu in the second position. Has epimerase activity with L-Ala-L-Glu, L-Pro-L-Glu, L-Val-L-Glu, L-Thr-L-Glu and L-Met-L-Glu (in vitro). The protein is L-amino acid-D/L-Glu epimerase of Francisella philomiragia subsp. philomiragia (strain ATCC 25017 / CCUG 19701 / FSC 153 / O#319-036).